The chain runs to 188 residues: Probable manganese efflux pump MntP (188 aa).

The next 5 membrane-spanning stretches (helical) occupy residues 3-23 (ITATVLLAFGMSMDAFAASVG), 66-86 (LEWNHWIAFVLLIFLGGRMII), 106-128 (WLLVTTAIATSLDAMAVGVGLAF), 143-163 (ATLIMSTLGMMVGRFIGSIIG), and 168-188 (ILGGLVLIGIGVQILWTHFHG).

This sequence belongs to the MntP (TC 9.B.29) family.

Its subcellular location is the cell inner membrane. Its function is as follows. Probably functions as a manganese efflux pump. The sequence is that of Probable manganese efflux pump MntP from Shigella sonnei (strain Ss046).